A 187-amino-acid chain; its full sequence is Ion-translocating oxidoreductase complex subunit B (187 aa).

The interval 1 to 23 (MIAAAASMSALGLGLGYLLGAAA) is hydrophobic. The 4Fe-4S domain occupies 29 to 88 (ETPPIVEEIAKILPGTNCGACGFPGCNGLAEAMAEGNAPVTACTPGGRDVALALAEIVTV). Positions 46, 49, 54, 71, 112, 115, 118, 122, 142, 145, 148, and 152 each coordinate [4Fe-4S] cluster. 4Fe-4S ferredoxin-type domains lie at 103–132 (MVAF…GGAK) and 133–162 (QIHT…SRVK).

The protein belongs to the 4Fe4S bacterial-type ferredoxin family. RnfB subfamily. The complex is composed of six subunits: RnfA, RnfB, RnfC, RnfD, RnfE and RnfG. [4Fe-4S] cluster serves as cofactor.

It localises to the cellular chromatophore membrane. Functionally, part of a membrane-bound complex that couples electron transfer with translocation of ions across the membrane. Required for nitrogen fixation. Involved in electron transfer to nitrogenase. This chain is Ion-translocating oxidoreductase complex subunit B, found in Rhodobacter capsulatus (Rhodopseudomonas capsulata).